The following is a 178-amino-acid chain: CASP-like protein 2U3 (178 aa).

Residues 1–4 are Cytoplasmic-facing; sequence MACR. The chain crosses the membrane as a helical span at residues 5–25; that stretch reads VMEVLLRVLAILLSIAGALVM. The Extracellular segment spans residues 26–52; that stretch reads AKDKQDTFVMLGTVPVPLYARHSYVEA. A helical transmembrane segment spans residues 53-73; sequence FVFLVYANGIVAIYCFIAVLL. The Cytoplasmic segment spans residues 74-80; sequence SLLAKSR. Residues 81–101 traverse the membrane as a helical segment; the sequence is VLAGLLFFMDQALAYLLLAAA. At 102–132 the chain is on the extracellular side; that stretch reads AASTEVAYIAKRGEKKLVWGEVCSNFEHFCN. A helical membrane pass occupies residues 133-153; it reads LVGVSLVLTFLSVLVLVTLAI. At 154–178 the chain is on the cytoplasmic side; it reads LSGKRLFGHPPLCAPPSTPPVHQGV.

This sequence belongs to the Casparian strip membrane proteins (CASP) family. In terms of assembly, homodimer and heterodimers.

The protein localises to the cell membrane. The sequence is that of CASP-like protein 2U3 from Pteridium aquilinum subsp. aquilinum (Bracken fern).